The sequence spans 238 residues: C-reactive protein (238 aa).

The signal sequence occupies residues 1–16 (MERFALWFIFLAGSLA). At Gln-17 the chain carries Pyrrolidone carboxylic acid. One can recognise a Pentraxin (PTX) domain in the interval 21-223 (VGNVFLFPKP…QATTQPKRQC (203 aa)). Cys-52 and Cys-113 are disulfide-bonded. Ca(2+)-binding residues include Asp-76, Asn-77, Glu-154, Gln-155, Asp-156, and Gln-166.

The protein belongs to the pentraxin family. As to quaternary structure, homodimer; disulfide-linked. It is not known if it assembles into a pentraxin (or pentaxin) structure. Pentaxins have a discoid arrangement of 5 non-covalently bound subunits. Requires Ca(2+) as cofactor. In terms of processing, cys-89 or Cys-223 or Cys-236 could be involved in interchain disulfide linkage.

The protein localises to the secreted. Its function is as follows. Displays several functions associated with host defense: it promotes agglutination, bacterial capsular swelling, phagocytosis, and complement fixation through its calcium-dependent binding to phosphorylcholine. The sequence is that of C-reactive protein (crp) from Xenopus laevis (African clawed frog).